The sequence spans 108 residues: Phosphoribosyl-AMP cyclohydrolase (108 aa).

Aspartate 78 contributes to the Mg(2+) binding site. Cysteine 79 is a Zn(2+) binding site. Aspartate 80 and aspartate 82 together coordinate Mg(2+). The Zn(2+) site is built by cysteine 95 and cysteine 102.

The protein belongs to the PRA-CH family. In terms of assembly, homodimer. Mg(2+) serves as cofactor. Requires Zn(2+) as cofactor.

The protein resides in the cytoplasm. The catalysed reaction is 1-(5-phospho-beta-D-ribosyl)-5'-AMP + H2O = 1-(5-phospho-beta-D-ribosyl)-5-[(5-phospho-beta-D-ribosylamino)methylideneamino]imidazole-4-carboxamide. The protein operates within amino-acid biosynthesis; L-histidine biosynthesis; L-histidine from 5-phospho-alpha-D-ribose 1-diphosphate: step 3/9. Catalyzes the hydrolysis of the adenine ring of phosphoribosyl-AMP. The sequence is that of Phosphoribosyl-AMP cyclohydrolase from Cenarchaeum symbiosum (strain A).